The primary structure comprises 290 residues: UPF0761 membrane protein Ent638_4092 (290 aa).

6 helical membrane-spanning segments follow: residues 44 to 64, 104 to 124, 140 to 160, 183 to 203, 210 to 230, and 244 to 264; these read LLSL…FPMF, VGAC…DSAL, FAVY…SLAI, IFPL…VPTL, AIVG…GFAL, and VLAV…IVLL.

This sequence belongs to the UPF0761 family.

The protein localises to the cell inner membrane. The chain is UPF0761 membrane protein Ent638_4092 from Enterobacter sp. (strain 638).